The sequence spans 877 residues: Envelope glycoprotein gp160 (877 aa).

Residues 1 to 19 (MKLTLLIGILLIGIGVVLN) form the signal peptide. Residues 20–707 (TRQQWVTVFY…SWFDFSKWLN (688 aa)) lie on the Extracellular side of the membrane. N-linked (GlcNAc...) asparagine; by host glycans are attached at residues Asn36, Asn69, Asn118, Asn135, Asn148, Asn158, Asn173, Asn204, Asn216, Asn258, Asn261, Asn272, Asn282, Asn288, Asn300, Asn312, Asn322, Asn379, Asn420, Asn431, Asn495, and Asn498. 5 disulfide bridges follow: Cys102/Cys224, Cys109/Cys215, Cys114/Cys174, Cys237/Cys267, and Cys247/Cys259. Residues 114–173 (CVELNSSEPTTTPKSTTASTTNITASTTTLPCVQNKTSTVLESCNETIIEKELNEEPASN) form a V1 region. The interval 174–215 (CTFAMAGYVRDQKKKYSVVWNDAEIMCKKGNNSNRECYMIHC) is V2. The tract at residues 317-349 (CKRPGNKTVLPVTIMAGLVFHSQRYNTRLRQAW) is V3. Cysteines 317 and 350 form a disulfide. Cystine bridges form between Cys402/Cys478 and Cys409/Cys451. The segment at 409-451 (CKMDWFLNYLNNRTVDPDHNPCNGTKGKGKAPGPCAQRTYVAC) is V4. The tract at residues 494-501 (KNRTNVTL) is V5. The interval 544–564 (VPFVLGFLGFLGAAGTAMGAA) is fusion peptide. The immunosuppression stretch occupies residues 607–623 (LNARVTALEKYLEDQAR). N-linked (GlcNAc...) asparagine; by host glycans are attached at residues Asn652 and Asn668. The stretch at 668 to 692 (NITTQLEEARAQEEKNLDAYQKLSS) forms a coiled coil. The interval 689–710 (KLSSWSDFWSWFDFSKWLNILK) is MPER; binding to GalCer. A helical membrane pass occupies residues 708-728 (ILKIGFLDVLGIIGLRLLYTV). Residues 729 to 877 (YSCIARVRQG…VRQGLEGILN (149 aa)) are Cytoplasmic-facing. Residues 739–742 (YSPL) carry the YXXL motif; contains endocytosis signal motif. The tract at residues 751 to 779 (WKGQPDNAEGPGEGGDKRKNSSEPWQKES) is disordered.

In terms of assembly, the mature envelope protein (Env) consists of a homotrimer of non-covalently associated gp120-gp41 heterodimers. The resulting complex protrudes from the virus surface as a spike. Interacts with host CD4 and CCR5. Gp120 also interacts with the C-type lectins CD209/DC-SIGN and CLEC4M/DC-SIGNR (collectively referred to as DC-SIGN(R)). The mature envelope protein (Env) consists of a homotrimer of non-covalently associated gp120-gp41 heterodimers. The resulting complex protrudes from the virus surface as a spike. Specific enzymatic cleavages in vivo yield mature proteins. Envelope glycoproteins are synthesized as an inactive precursor that is heavily N-glycosylated and processed likely by host cell furin in the Golgi to yield the mature SU and TM proteins. The cleavage site between SU and TM requires the minimal sequence [KR]-X-[KR]-R.

The protein localises to the virion membrane. Its subcellular location is the host cell membrane. It is found in the host endosome membrane. In terms of biological role, the surface protein gp120 (SU) attaches the virus to the host lymphoid cell by binding to the primary receptor CD4. This interaction induces a structural rearrangement creating a high affinity binding site for a chemokine coreceptor like CCR5. This peculiar 2 stage receptor-interaction strategy allows gp120 to maintain the highly conserved coreceptor-binding site in a cryptic conformation, protected from neutralizing antibodies. These changes are transmitted to the transmembrane protein gp41 and are thought to activate its fusogenic potential by unmasking its fusion peptide. Its function is as follows. Surface protein gp120 (SU) may target the virus to gut-associated lymphoid tissue (GALT) by binding host ITGA4/ITGB7 (alpha-4/beta-7 integrins), a complex that mediates T-cell migration to the GALT. Interaction between gp120 and ITGA4/ITGB7 would allow the virus to enter GALT early in the infection, infecting and killing most of GALT's resting CD4+ T-cells. This T-cell depletion is believed to be the major insult to the host immune system leading to AIDS. The surface protein gp120 is a ligand for CD209/DC-SIGN and CLEC4M/DC-SIGNR, which are respectively found on dendritic cells (DCs), and on endothelial cells of liver sinusoids and lymph node sinuses. These interactions allow capture of viral particles at mucosal surfaces by these cells and subsequent transmission to permissive cells. DCs are professional antigen presenting cells, critical for host immunity by inducing specific immune responses against a broad variety of pathogens. They act as sentinels in various tissues where they take up antigen, process it, and present it to T-cells following migration to lymphoid organs. SIV subverts the migration properties of dendritic cells to gain access to CD4+ T-cells in lymph nodes. Virus transmission to permissive T-cells occurs either in trans (without DCs infection, through viral capture and transmission), or in cis (following DCs productive infection, through the usual CD4-gp120 interaction), thereby inducing a robust infection. In trans infection, bound virions remain infectious over days and it is proposed that they are not degraded, but protected in non-lysosomal acidic organelles within the DCs close to the cell membrane thus contributing to the viral infectious potential during DCs' migration from the periphery to the lymphoid tissues. On arrival at lymphoid tissues, intact virions recycle back to DCs' cell surface allowing virus transmission to CD4+ T-cells. Virion capture also seems to lead to MHC-II-restricted viral antigen presentation, and probably to the activation of SIV-specific CD4+ cells. Functionally, the transmembrane protein gp41 (TM) acts as a class I viral fusion protein. Under the current model, the protein has at least 3 conformational states: pre-fusion native state, pre-hairpin intermediate state, and post-fusion hairpin state. During fusion of viral and target intracellular membranes, the coiled coil regions (heptad repeats) assume a trimer-of-hairpins structure, positioning the fusion peptide in close proximity to the C-terminal region of the ectodomain. The formation of this structure appears to drive apposition and subsequent fusion of viral and target cell membranes. Complete fusion occurs in host cell endosomes. The virus undergoes clathrin-dependent internalization long before endosomal fusion, thus minimizing the surface exposure of conserved viral epitopes during fusion and reducing the efficacy of inhibitors targeting these epitopes. Membranes fusion leads to delivery of the nucleocapsid into the cytoplasm. In terms of biological role, the envelope glycoprotein gp160 precursor down-modulates cell surface CD4 antigen by interacting with it in the endoplasmic reticulum and blocking its transport to the cell surface. Its function is as follows. The gp120-gp41 heterodimer allows rapid transcytosis of the virus through CD4 negative cells such as simple epithelial monolayers of the intestinal, rectal and endocervical epithelial barriers. Both gp120 and gp41 specifically recognize glycosphingolipids galactosyl-ceramide (GalCer) or 3' sulfo-galactosyl-ceramide (GalS) present in the lipid rafts structures of epithelial cells. Binding to these alternative receptors allows the rapid transcytosis of the virus through the epithelial cells. This transcytotic vesicle-mediated transport of virions from the apical side to the basolateral side of the epithelial cells does not involve infection of the cells themselves. In Cercopithecidae (Old World monkeys), this protein is Envelope glycoprotein gp160 (env).